A 412-amino-acid polypeptide reads, in one-letter code: Protein MT3510 (412 aa).

An N6-(pyridoxal phosphate)lysine modification is found at Lys-227.

It belongs to the DegT/DnrJ/EryC1 family.

This chain is Protein MT3510, found in Mycobacterium tuberculosis (strain CDC 1551 / Oshkosh).